The sequence spans 670 residues: Transcription factor vib-1 (670 aa).

The segment at residues 106-341 (TEMVQDLRDD…RSPRNFQARK (236 aa)) is a DNA-binding region (NDT80). Polar residues-rich tracts occupy residues 394-438 (FTSA…TTSM) and 553-568 (LGNS…QHHP). 2 disordered regions span residues 394–457 (FTSA…SYTA) and 496–670 (SAPP…WNAT). Residues 592 to 605 (ASAPASAPTSAAPP) are compositionally biased toward low complexity. Positions 611–631 (PSQSWTSTAGEGQTSSYTNGG) are enriched in polar residues.

The protein resides in the nucleus. It is found in the cytoplasm. Transcription factor that acts as a positive regulator of nonrepressible acid phosphatase activity. Is a major regulator of responses to nitrogen and carbon starvation and is essential for the expression of genes involved in vegetative incompatibility (like pin-c, het-6, and tol). Vegetative incompatibility is a non-self-recognition system ubiquitous in filamentous fungi which results in programmed cell death. In Neurospora crassa (strain ATCC 24698 / 74-OR23-1A / CBS 708.71 / DSM 1257 / FGSC 987), this protein is Transcription factor vib-1 (vib-1).